Reading from the N-terminus, the 398-residue chain is Enoyl-[acyl-carrier-protein] reductase [NADH] (398 aa).

Residues 48–53, 74–75, 111–112, and 139–140 contribute to the NAD(+) site; these read GASTGY, FE, DA, and LA. Tyr-225 is a binding site for substrate. Tyr-235 serves as the catalytic Proton donor. Residues Lys-244 and 273 to 275 each bind NAD(+); that span reads VVT.

Belongs to the TER reductase family. In terms of assembly, monomer.

The enzyme catalyses a 2,3-saturated acyl-[ACP] + NAD(+) = a (2E)-enoyl-[ACP] + NADH + H(+). It participates in lipid metabolism; fatty acid biosynthesis. Functionally, involved in the final reduction of the elongation cycle of fatty acid synthesis (FAS II). Catalyzes the reduction of a carbon-carbon double bond in an enoyl moiety that is covalently linked to an acyl carrier protein (ACP). This Paraburkholderia xenovorans (strain LB400) protein is Enoyl-[acyl-carrier-protein] reductase [NADH].